We begin with the raw amino-acid sequence, 194 residues long: PRELI domain containing protein 3B (194 aa).

The 172-residue stretch at 1–172 (MKIWTSEHVF…VIHKLNAEIE (172 aa)) folds into the PRELI/MSF1 domain. Residues Ser46 and Ser51 each carry the phosphoserine modification.

The protein belongs to the slowmo family.

The protein is PRELI domain containing protein 3B (PRELID3B) of Homo sapiens (Human).